Here is a 485-residue protein sequence, read N- to C-terminus: Ribulose bisphosphate carboxylase large chain (485 aa).

Positions 1–2 (MS) are excised as a propeptide. Proline 3 carries the post-translational modification N-acetylproline. Lysine 14 bears the N6,N6,N6-trimethyllysine mark. Substrate contacts are provided by asparagine 123 and threonine 173. Catalysis depends on lysine 175, which acts as the Proton acceptor. Lysine 177 serves as a coordination point for substrate. Mg(2+)-binding residues include lysine 201, aspartate 203, and glutamate 204. Position 201 is an N6-carboxylysine (lysine 201). Histidine 294 (proton acceptor) is an active-site residue. Substrate contacts are provided by arginine 295, histidine 327, and serine 379.

This sequence belongs to the RuBisCO large chain family. Type I subfamily. In terms of assembly, heterohexadecamer of 8 large chains and 8 small chains; disulfide-linked. The disulfide link is formed within the large subunit homodimers. Mg(2+) serves as cofactor. In terms of processing, the disulfide bond which can form in the large chain dimeric partners within the hexadecamer appears to be associated with oxidative stress and protein turnover.

The protein localises to the plastid. Its subcellular location is the chloroplast. The enzyme catalyses 2 (2R)-3-phosphoglycerate + 2 H(+) = D-ribulose 1,5-bisphosphate + CO2 + H2O. The catalysed reaction is D-ribulose 1,5-bisphosphate + O2 = 2-phosphoglycolate + (2R)-3-phosphoglycerate + 2 H(+). Functionally, ruBisCO catalyzes two reactions: the carboxylation of D-ribulose 1,5-bisphosphate, the primary event in carbon dioxide fixation, as well as the oxidative fragmentation of the pentose substrate in the photorespiration process. Both reactions occur simultaneously and in competition at the same active site. The protein is Ribulose bisphosphate carboxylase large chain of Helianthus annuus (Common sunflower).